The following is a 305-amino-acid chain: Acetaldehyde dehydrogenase (305 aa).

13–16 (SGNI) is a binding site for NAD(+). Cys-128 serves as the catalytic Acyl-thioester intermediate. NAD(+) contacts are provided by residues 159–167 (SAGPGTRQN) and Asn-278.

It belongs to the acetaldehyde dehydrogenase family.

The catalysed reaction is acetaldehyde + NAD(+) + CoA = acetyl-CoA + NADH + H(+). This chain is Acetaldehyde dehydrogenase, found in Chloroflexus aurantiacus (strain ATCC 29366 / DSM 635 / J-10-fl).